The chain runs to 521 residues: uncharacterized protein (521 aa).

The interval 1–25 is disordered; that stretch reads MLQRSLGVNGRKLAMSARSAKRERK. 6 helical membrane-spanning segments follow: residues 68 to 88, 114 to 134, 160 to 180, 192 to 212, 290 to 310, and 399 to 419; these read GAVWVLPTFGVAIGLGSGAVL, VLIVVSATMITTIGIVFSLTV, VVLAIFACTFAYSTGGLHTVG, VAVTGSLALAFVSIAALIYFL, ALLVTFVGDYVTAGGLLGWCW, and LLFWLPYPSFATYLHVGCAQI.

It is found in the cell membrane. This is an uncharacterized protein from Mycobacterium bovis (strain ATCC BAA-935 / AF2122/97).